Here is a 364-residue protein sequence, read N- to C-terminus: Inner membrane ABC transporter permease protein YejB (364 aa).

Topologically, residues M1–R8 are periplasmic. The helical transmembrane segment at L9–I29 threads the bilayer. Residues A30–Q37 lie on the Cytoplasmic side of the membrane. The helical transmembrane segment at A38–V58 threads the bilayer. Residues R59 to V135 lie on the Periplasmic side of the membrane. The ABC transmembrane type-1 domain occupies L133–S348. A helical transmembrane segment spans residues S136 to I156. Residues R157 to A172 lie on the Cytoplasmic side of the membrane. Residues F173 to F193 traverse the membrane as a helical segment. Residues A194–Y224 lie on the Periplasmic side of the membrane. The chain crosses the membrane as a helical span at residues L225–M245. At L246–L284 the chain is on the cytoplasmic side. The chain crosses the membrane as a helical span at residues L285–I305. The Periplasmic segment spans residues E306–D326. Residues Y327–V347 form a helical membrane-spanning segment. Over S348 to R364 the chain is Cytoplasmic.

Belongs to the binding-protein-dependent transport system permease family. OppBC subfamily.

The protein resides in the cell inner membrane. Its function is as follows. Probably part of a binding-protein-dependent transport system. Probably responsible for the translocation of the substrate across the membrane. This Escherichia coli O157:H7 protein is Inner membrane ABC transporter permease protein YejB (yejB).